Reading from the N-terminus, the 616-residue chain is E3 ubiquitin-protein ligase DTX4 (616 aa).

2 consecutive WWE domains span residues M1–R78 and N79–R155. Disordered regions lie at residues V223 to V254 and P355 to P387. The span at K375–G384 shows a compositional bias: basic residues. The RING-type; atypical zinc-finger motif lies at C406 to K465.

It belongs to the Deltex family. As to quaternary structure, interacts with NLRP4. In terms of tissue distribution, expressed in brain, testis, embryonic fibroblasts and thymocytes.

It localises to the cytoplasm. The enzyme catalyses S-ubiquitinyl-[E2 ubiquitin-conjugating enzyme]-L-cysteine + [acceptor protein]-L-lysine = [E2 ubiquitin-conjugating enzyme]-L-cysteine + N(6)-ubiquitinyl-[acceptor protein]-L-lysine.. It functions in the pathway protein modification; protein ubiquitination. Functions as a ubiquitin ligase protein in vivo, mediating 'Lys48'-linked polyubiquitination and promoting degradation of TBK1, targeting to TBK1 requires interaction with NLRP4. Regulator of Notch signaling, a signaling pathway involved in cell-cell communications that regulates a broad spectrum of cell-fate determinations. This is E3 ubiquitin-protein ligase DTX4 (Dtx4) from Mus musculus (Mouse).